Here is a 582-residue protein sequence, read N- to C-terminus: Formate--tetrahydrofolate ligase (582 aa).

65–72 (TPLGEGKT) is an ATP binding site.

This sequence belongs to the formate--tetrahydrofolate ligase family.

It carries out the reaction (6S)-5,6,7,8-tetrahydrofolate + formate + ATP = (6R)-10-formyltetrahydrofolate + ADP + phosphate. Its pathway is one-carbon metabolism; tetrahydrofolate interconversion. This is Formate--tetrahydrofolate ligase from Aliivibrio fischeri (strain ATCC 700601 / ES114) (Vibrio fischeri).